Here is a 241-residue protein sequence, read N- to C-terminus: Isoprenyl transferase (241 aa).

The active site involves Asp17. Mg(2+) is bound at residue Asp17. Residues 18–21, Trp22, Arg30, His34, and 62–64 contribute to the substrate site; these read GNGR and STE. Asn65 functions as the Proton acceptor in the catalytic mechanism. Residues Trp66, Arg68, Arg186, and 192–194 each bind substrate; that span reads RLS. Mg(2+) is bound at residue Glu205.

Belongs to the UPP synthase family. Homodimer. Requires Mg(2+) as cofactor.

In terms of biological role, catalyzes the condensation of isopentenyl diphosphate (IPP) with allylic pyrophosphates generating different type of terpenoids. The sequence is that of Isoprenyl transferase from Leptospira interrogans serogroup Icterohaemorrhagiae serovar copenhageni (strain Fiocruz L1-130).